Consider the following 311-residue polypeptide: Probable cobalamin biosynthesis protein CobD (311 aa).

A run of 4 helical transmembrane segments spans residues 53–73 (FIFG…AIYG), 76–96 (ILIN…FLIS), 157–177 (DSII…AFIY), and 288–308 (FSID…YVIF).

This sequence belongs to the CobD/CbiB family.

It is found in the cell membrane. Its pathway is cofactor biosynthesis; adenosylcobalamin biosynthesis. Converts cobyric acid to cobinamide by the addition of aminopropanol on the F carboxylic group. In Methanococcus aeolicus (strain ATCC BAA-1280 / DSM 17508 / OCM 812 / Nankai-3), this protein is Probable cobalamin biosynthesis protein CobD.